A 464-amino-acid chain; its full sequence is Cysteine--tRNA ligase (464 aa).

A Zn(2+)-binding site is contributed by cysteine 28. Residues 30-40 (ITAYDFCHIGH) carry the 'HIGH' region motif. The Zn(2+) site is built by cysteine 210, histidine 235, and glutamate 239. The 'KMSKS' region signature appears at 267–271 (KMSKS). Lysine 270 lines the ATP pocket.

The protein belongs to the class-I aminoacyl-tRNA synthetase family. Monomer. Requires Zn(2+) as cofactor.

It localises to the cytoplasm. The catalysed reaction is tRNA(Cys) + L-cysteine + ATP = L-cysteinyl-tRNA(Cys) + AMP + diphosphate. This Buchnera aphidicola subsp. Baizongia pistaciae (strain Bp) protein is Cysteine--tRNA ligase.